Consider the following 525-residue polypeptide: GMP synthase [glutamine-hydrolyzing] (525 aa).

Residues 9–207 (RILILDFGSQ…VRDICQCEAL (199 aa)) enclose the Glutamine amidotransferase type-1 domain. Residue cysteine 86 is the Nucleophile of the active site. Residues histidine 181 and glutamate 183 contribute to the active site. Positions 208–400 (WTPAKIIDDA…LGLPYDMLYR (193 aa)) constitute a GMPS ATP-PPase domain. 235 to 241 (SGGVDSS) provides a ligand contact to ATP.

In terms of assembly, homodimer.

It catalyses the reaction XMP + L-glutamine + ATP + H2O = GMP + L-glutamate + AMP + diphosphate + 2 H(+). It functions in the pathway purine metabolism; GMP biosynthesis; GMP from XMP (L-Gln route): step 1/1. In terms of biological role, catalyzes the synthesis of GMP from XMP. In Klebsiella pneumoniae (strain 342), this protein is GMP synthase [glutamine-hydrolyzing].